Consider the following 177-residue polypeptide: Biotin-dependent acetyl-/propionyl-coenzyme A carboxylase epsilon subunit (177 aa).

The tract at residues Met1 to Pro112 is disordered. A compositionally biased stretch (polar residues) spans Val18 to Ala100.

In terms of assembly, interacts with the AccA3/AccD5 biotin-dependent acyl-CoA carboxylase complex. Interacts with the AccA3/AccD6 complex. Is also part of the long-chain acyl-CoA carboxylase (LCC) complex, which is composed of AccA3, AccD4, AccD5 and AccE5. The four subunits are essential for activity, but AccD5, together with AccE5, probably plays a structural role rather than a catalytic one.

Functionally, stimulates activity of the AccA3/AccD5 biotin-dependent acyl-CoA carboxylase complex. Interacts with AccD5 and modulates its carboxylase activity for acetyl-CoA and propionyl-CoA. Inhibits activity of the AccA3/AccD6 complex. Is also required for the activity of the long-chain acyl-CoA carboxylase (LCC) complex. This Mycobacterium tuberculosis (strain ATCC 25618 / H37Rv) protein is Biotin-dependent acetyl-/propionyl-coenzyme A carboxylase epsilon subunit.